Consider the following 338-residue polypeptide: Ketol-acid reductoisomerase (NADP(+)) (338 aa).

One can recognise a KARI N-terminal Rossmann domain in the interval 1–181 (MKVFYDKDAD…GGGRAGIIET (181 aa)). NADP(+) is bound by residues 24–27 (YGSQ), Arg-47, and Ser-52. Residue His-107 is part of the active site. Gly-133 provides a ligand contact to NADP(+). The KARI C-terminal knotted domain maps to 182–327 (NFREETETDL…SKLRAMMPWI (146 aa)). 4 residues coordinate Mg(2+): Asp-190, Glu-194, Glu-226, and Glu-230. Ser-251 is a binding site for substrate.

The protein belongs to the ketol-acid reductoisomerase family. The cofactor is Mg(2+).

The catalysed reaction is (2R)-2,3-dihydroxy-3-methylbutanoate + NADP(+) = (2S)-2-acetolactate + NADPH + H(+). The enzyme catalyses (2R,3R)-2,3-dihydroxy-3-methylpentanoate + NADP(+) = (S)-2-ethyl-2-hydroxy-3-oxobutanoate + NADPH + H(+). Its pathway is amino-acid biosynthesis; L-isoleucine biosynthesis; L-isoleucine from 2-oxobutanoate: step 2/4. It functions in the pathway amino-acid biosynthesis; L-valine biosynthesis; L-valine from pyruvate: step 2/4. Its function is as follows. Involved in the biosynthesis of branched-chain amino acids (BCAA). Catalyzes an alkyl-migration followed by a ketol-acid reduction of (S)-2-acetolactate (S2AL) to yield (R)-2,3-dihydroxy-isovalerate. In the isomerase reaction, S2AL is rearranged via a Mg-dependent methyl migration to produce 3-hydroxy-3-methyl-2-ketobutyrate (HMKB). In the reductase reaction, this 2-ketoacid undergoes a metal-dependent reduction by NADPH to yield (R)-2,3-dihydroxy-isovalerate. The polypeptide is Ketol-acid reductoisomerase (NADP(+)) (Paraburkholderia xenovorans (strain LB400)).